A 402-amino-acid chain; its full sequence is 1-deoxy-D-xylulose 5-phosphate reductoisomerase (402 aa).

NADPH-binding residues include threonine 13, glycine 14, serine 15, isoleucine 16, and asparagine 126. Lysine 127 is a binding site for 1-deoxy-D-xylulose 5-phosphate. Residue glutamate 128 participates in NADPH binding. Mn(2+) is bound at residue aspartate 152. 1-deoxy-D-xylulose 5-phosphate is bound by residues serine 153, glutamate 154, serine 188, and histidine 211. Glutamate 154 contacts Mn(2+). Glycine 217 contributes to the NADPH binding site. Positions 224, 229, 230, and 233 each coordinate 1-deoxy-D-xylulose 5-phosphate. A Mn(2+)-binding site is contributed by glutamate 233.

The protein belongs to the DXR family. Mg(2+) is required as a cofactor. The cofactor is Mn(2+).

The catalysed reaction is 2-C-methyl-D-erythritol 4-phosphate + NADP(+) = 1-deoxy-D-xylulose 5-phosphate + NADPH + H(+). It participates in isoprenoid biosynthesis; isopentenyl diphosphate biosynthesis via DXP pathway; isopentenyl diphosphate from 1-deoxy-D-xylulose 5-phosphate: step 1/6. Its function is as follows. Catalyzes the NADPH-dependent rearrangement and reduction of 1-deoxy-D-xylulose-5-phosphate (DXP) to 2-C-methyl-D-erythritol 4-phosphate (MEP). This Psychrobacter arcticus (strain DSM 17307 / VKM B-2377 / 273-4) protein is 1-deoxy-D-xylulose 5-phosphate reductoisomerase.